The primary structure comprises 265 residues: Silencing boundary-establishment protein FUB1-like protein (265 aa).

The segment at 194–265 is disordered; the sequence is HPENRSRNEQ…MPPGSSDMFM (72 aa).

It belongs to the proteasome inhibitor PI31 family. As to quaternary structure, interacts with the 20S proteasome.

It is found in the cytoplasm. The protein resides in the nucleus. May play a role in the establishment of transcriptional silencing boundaries, preventing the propagation of heterochromatic silencing. In Schizosaccharomyces pombe (strain 972 / ATCC 24843) (Fission yeast), this protein is Silencing boundary-establishment protein FUB1-like protein.